A 153-amino-acid polypeptide reads, in one-letter code: D-aminoacyl-tRNA deacylase (153 aa).

Positions glycine 137 to proline 138 match the Gly-cisPro motif, important for rejection of L-amino acids motif.

Belongs to the DTD family. Homodimer.

It localises to the cytoplasm. It carries out the reaction glycyl-tRNA(Ala) + H2O = tRNA(Ala) + glycine + H(+). The enzyme catalyses a D-aminoacyl-tRNA + H2O = a tRNA + a D-alpha-amino acid + H(+). An aminoacyl-tRNA editing enzyme that deacylates mischarged D-aminoacyl-tRNAs. Also deacylates mischarged glycyl-tRNA(Ala), protecting cells against glycine mischarging by AlaRS. Acts via tRNA-based rather than protein-based catalysis; rejects L-amino acids rather than detecting D-amino acids in the active site. By recycling D-aminoacyl-tRNA to D-amino acids and free tRNA molecules, this enzyme counteracts the toxicity associated with the formation of D-aminoacyl-tRNA entities in vivo and helps enforce protein L-homochirality. The polypeptide is D-aminoacyl-tRNA deacylase (Myxococcus xanthus (strain DK1622)).